We begin with the raw amino-acid sequence, 406 residues long: Cysteine desulfurase (406 aa).

An N6-(pyridoxal phosphate)lysine modification is found at K226. The active-site Cysteine persulfide intermediate is the C364.

The protein belongs to the class-V pyridoxal-phosphate-dependent aminotransferase family. Csd subfamily. Homodimer. Interacts with SufE and the SufBCD complex composed of SufB, SufC and SufD. The interaction with SufE is required to mediate the direct transfer of the sulfur atom from the S-sulfanylcysteine. Pyridoxal 5'-phosphate serves as cofactor.

It is found in the cytoplasm. The enzyme catalyses (sulfur carrier)-H + L-cysteine = (sulfur carrier)-SH + L-alanine. It catalyses the reaction L-selenocysteine + AH2 = hydrogenselenide + L-alanine + A + H(+). It functions in the pathway cofactor biosynthesis; iron-sulfur cluster biosynthesis. Cysteine desulfurases mobilize the sulfur from L-cysteine to yield L-alanine, an essential step in sulfur metabolism for biosynthesis of a variety of sulfur-containing biomolecules. Component of the suf operon, which is activated and required under specific conditions such as oxidative stress and iron limitation. Acts as a potent selenocysteine lyase in vitro, that mobilizes selenium from L-selenocysteine. Selenocysteine lyase activity is however unsure in vivo. This Salmonella choleraesuis (strain SC-B67) protein is Cysteine desulfurase.